We begin with the raw amino-acid sequence, 202 residues long: Small ribosomal subunit protein uS4 (202 aa).

The segment at 22 to 43 (TRKSARRAYPPGQHGQNRRKRS) is disordered. The S4 RNA-binding domain maps to 90-152 (MRLDNTVFRL…EKSKEMVKTN (63 aa)).

This sequence belongs to the universal ribosomal protein uS4 family. Part of the 30S ribosomal subunit. Contacts protein S5. The interaction surface between S4 and S5 is involved in control of translational fidelity.

One of the primary rRNA binding proteins, it binds directly to 16S rRNA where it nucleates assembly of the body of the 30S subunit. In terms of biological role, with S5 and S12 plays an important role in translational accuracy. This chain is Small ribosomal subunit protein uS4, found in Trichodesmium erythraeum (strain IMS101).